The following is a 257-amino-acid chain: Chlorocatechol 1,2-dioxygenase (257 aa).

Fe cation is bound by residues Y134, Y169, H194, and H196.

Belongs to the intradiol ring-cleavage dioxygenase family. The cofactor is Fe(3+).

It carries out the reaction 4-chlorocatechol + O2 = 3-chloro-cis,cis-muconate + 2 H(+). The catalysed reaction is 3,5-dichlorocatechol + O2 = (2E,4E)-2,4-dichloromuconate + 2 H(+). The sequence is that of Chlorocatechol 1,2-dioxygenase (clcA) from Rhodococcus opacus (Nocardia opaca).